The following is a 139-amino-acid chain: Large-conductance mechanosensitive channel (139 aa).

Helical transmembrane passes span 9–29 (AFAV…GAAF) and 79–99 (IQSV…VKAI).

The protein belongs to the MscL family. In terms of assembly, homopentamer.

Its subcellular location is the cell inner membrane. Functionally, channel that opens in response to stretch forces in the membrane lipid bilayer. May participate in the regulation of osmotic pressure changes within the cell. The sequence is that of Large-conductance mechanosensitive channel from Pseudomonas fluorescens (strain SBW25).